The chain runs to 209 residues: Ribosomal RNA small subunit methyltransferase G (209 aa).

S-adenosyl-L-methionine contacts are provided by residues Gly-71, Phe-76, 122-123 (AE), and Arg-135.

It belongs to the methyltransferase superfamily. RNA methyltransferase RsmG family.

It localises to the cytoplasm. Functionally, specifically methylates the N7 position of a guanine in 16S rRNA. In Flavobacterium psychrophilum (strain ATCC 49511 / DSM 21280 / CIP 103535 / JIP02/86), this protein is Ribosomal RNA small subunit methyltransferase G.